The following is a 510-amino-acid chain: NAD(P) transhydrogenase subunit alpha (510 aa).

The Cytoplasmic portion of the chain corresponds to 1–401 (MRIGIPRERL…EEKCTCSPWR (401 aa)). NAD(+) contacts are provided by residues 120–122 (RIS), valine 175, 195–197 (DTR), glutamate 238, and leucine 257. 2 consecutive transmembrane segments (helical) span residues 402–422 (KYAL…VAPK) and 423–443 (EFLG…YVVW). Residues 444 to 452 (NVSHALHTP) lie on the Cytoplasmic side of the membrane. A helical transmembrane segment spans residues 453–473 (LMSVTNAISGIIVVGALLQIG). Topologically, residues 474 to 476 (QGG) are periplasmic. Residues 477-497 (WVSFLSFIAVLIASINIFGGF) traverse the membrane as a helical segment. Topologically, residues 498-510 (TVTQRMLKMFRKN) are cytoplasmic.

The protein belongs to the AlaDH/PNT family. In terms of assembly, heterodimer of an alpha (PntA) and a beta (PntB) chain. Alpha subunit serves as the dimerization unit.

The protein resides in the cell inner membrane. The enzyme catalyses NAD(+) + NADPH + H(+)(in) = NADH + NADP(+) + H(+)(out). Its function is as follows. The transhydrogenation between NADH and NADP is coupled to respiration and ATP hydrolysis and functions as a proton pump across the membrane. The sequence is that of NAD(P) transhydrogenase subunit alpha (pntA) from Escherichia coli (strain K12).